A 543-amino-acid chain; its full sequence is MGITTALLLVMLMSVHTSSYETTILKPYKEDNFRSLVAKACQFIDAHELCVSNIWTHVKESGHGLNPHSVLRAAVKEAHDKAKLAMERIPTVMMLSIRSREQVAIEDCKELVGFSVTELAWSMLEMNKLHGGGGIDLDDGSHDAAAAGGNLKTWLSAAMSNQDTCLEGFEGTERKYEELIKGSLRQVTQLVSNVLDMYTQLNALPFKASRNESVIASPEWLTETDESLMMRHDPSVMHPNTVVAIDGKGKYRTINEAINEAPNHSTKRYVIYVKKGVYKENIDLKKKKTNIMLVGDGIGQTIITGDRNFMQGLTTFRTATVAVSGRGFIAKDITFRNTAGPQNRQAVALRVDSDQSAFYRCSVEGYQDTLYAHSLRQFYRDCEIYGTIDFIFGNGAAVLQNCKIYTRVPLPLQKVTITAQGRKSPNQNTGFVIQNSYVLATQPTYLGRPWKLYSRTVYMNTYMSQLVQPRGWLEWFGNFALDTLWYGEYNNIGPGWRSSGRVKWPGYHIMDKRTALSFTVGSFIDGRRWLPATGVTFTAGLAN.

The signal sequence occupies residues 1–19 (MGITTALLLVMLMSVHTSS). A pectinesterase inhibitor 22 region spans residues 38–197 (AKACQFIDAH…TQLVSNVLDM (160 aa)). 2 N-linked (GlcNAc...) asparagine glycosylation sites follow: Asn211 and Asn263. The pectinesterase 22 stretch occupies residues 240-527 (NTVVAIDGKG…FTVGSFIDGR (288 aa)). Substrate is bound by residues Thr315 and Gln345. The active-site Proton donor; for pectinesterase activity is Asp368. A disulfide bond links Cys382 and Cys402. Asp389 (nucleophile; for pectinesterase activity) is an active-site residue. Substrate is bound by residues Arg448 and Trp450.

The protein in the N-terminal section; belongs to the PMEI family. This sequence in the C-terminal section; belongs to the pectinesterase family.

It localises to the secreted. The protein resides in the cell wall. It catalyses the reaction [(1-&gt;4)-alpha-D-galacturonosyl methyl ester](n) + n H2O = [(1-&gt;4)-alpha-D-galacturonosyl](n) + n methanol + n H(+). It participates in glycan metabolism; pectin degradation; 2-dehydro-3-deoxy-D-gluconate from pectin: step 1/5. In terms of biological role, acts in the modification of cell walls via demethylesterification of cell wall pectin. In Arabidopsis thaliana (Mouse-ear cress), this protein is Putative pectinesterase/pectinesterase inhibitor 22 (PME22).